Consider the following 478-residue polypeptide: Siroheme synthase (478 aa).

The segment at 1 to 207 (MTANVLFPLF…QRHAEAEAVL (207 aa)) is precorrin-2 dehydrogenase /sirohydrochlorin ferrochelatase. Residues 25–26 (KV) and 46–47 (PS) each bind NAD(+). Phosphoserine is present on Ser-132. Residues 220-478 (GSVTLVGAGA…PCPPRTHPIS (259 aa)) form a uroporphyrinogen-III C-methyltransferase region. The active-site Proton acceptor is the Asp-252. Lys-274 acts as the Proton donor in catalysis. S-adenosyl-L-methionine contacts are provided by residues 305–307 (GGD), Val-310, 335–336 (TA), Met-387, and Gly-416.

It in the N-terminal section; belongs to the precorrin-2 dehydrogenase / sirohydrochlorin ferrochelatase family. The protein in the C-terminal section; belongs to the precorrin methyltransferase family.

It carries out the reaction uroporphyrinogen III + 2 S-adenosyl-L-methionine = precorrin-2 + 2 S-adenosyl-L-homocysteine + H(+). The catalysed reaction is precorrin-2 + NAD(+) = sirohydrochlorin + NADH + 2 H(+). The enzyme catalyses siroheme + 2 H(+) = sirohydrochlorin + Fe(2+). Its pathway is cofactor biosynthesis; adenosylcobalamin biosynthesis; precorrin-2 from uroporphyrinogen III: step 1/1. It participates in cofactor biosynthesis; adenosylcobalamin biosynthesis; sirohydrochlorin from precorrin-2: step 1/1. It functions in the pathway porphyrin-containing compound metabolism; siroheme biosynthesis; precorrin-2 from uroporphyrinogen III: step 1/1. The protein operates within porphyrin-containing compound metabolism; siroheme biosynthesis; siroheme from sirohydrochlorin: step 1/1. Its pathway is porphyrin-containing compound metabolism; siroheme biosynthesis; sirohydrochlorin from precorrin-2: step 1/1. Its function is as follows. Multifunctional enzyme that catalyzes the SAM-dependent methylations of uroporphyrinogen III at position C-2 and C-7 to form precorrin-2 via precorrin-1. Then it catalyzes the NAD-dependent ring dehydrogenation of precorrin-2 to yield sirohydrochlorin. Finally, it catalyzes the ferrochelation of sirohydrochlorin to yield siroheme. The chain is Siroheme synthase from Xylella fastidiosa (strain M23).